A 377-amino-acid chain; its full sequence is NAC domain-containing protein 76 (377 aa).

One can recognise an NAC domain in the interval 10–159 (VPPGFRFHPT…GWVVCRAFKK (150 aa)). The DNA-binding element occupies 110–165 (IGMRKTLVFYKGRAPNGQKTDWIMHEYRLESDENAPPQEEGWVVCRAFKKKPMTGQ). Residues 312–347 (GVSGFGGHHEEDNNKIGHYNNEESNNKGSVETASST) are disordered. Positions 318 to 336 (GHHEEDNNKIGHYNNEESN) are enriched in basic and acidic residues. The segment covering 337–347 (NKGSVETASST) has biased composition (polar residues).

This sequence belongs to the plant vascular related NAC-domain protein family. As to quaternary structure, interacts with NAC030/VND7. In terms of tissue distribution, detected in root protoxylem and metaxylem poles and in vessels of protoxylems, outermost metaxylems, inner metaxylems, shoots and hypocotyls. Expressed in roots, hypocotyls, cotyledons and leaves. Present in developing xylems. Specifically expressed in vessels but not in interfascicular fibers in stems.

Its subcellular location is the nucleus. Its function is as follows. Transcription activator that binds to the secondary wall NAC binding element (SNBE), 5'-(T/A)NN(C/T)(T/C/G)TNNNNNNNA(A/C)GN(A/C/T)(A/T)-3', in the promoter of target genes. Involved in xylem formation by promoting the expression of secondary wall-associated transcription factors and of genes involved in secondary wall biosynthesis and programmed cell death, genes driven by the secondary wall NAC binding element (SNBE). Triggers thickening of secondary walls. The polypeptide is NAC domain-containing protein 76 (Arabidopsis thaliana (Mouse-ear cress)).